The following is a 637-amino-acid chain: Chaperone protein DnaK (637 aa).

Thr198 bears the Phosphothreonine; by autocatalysis mark. Positions 600–637 (IAQQQAQAQQAQGADAGAQSKDDDVVDAEFEEVKDDKK) are disordered. Positions 601-618 (AQQQAQAQQAQGADAGAQ) are enriched in low complexity. Residues 623–637 (DVVDAEFEEVKDDKK) show a composition bias toward acidic residues.

This sequence belongs to the heat shock protein 70 family.

Acts as a chaperone. This Vibrio parahaemolyticus serotype O3:K6 (strain RIMD 2210633) protein is Chaperone protein DnaK.